The following is a 354-amino-acid chain: LAS seventeen-binding protein 5 (354 aa).

Residues T15 to S161 enclose the VHS domain. Disordered regions lie at residues Y160 to A184 and S296 to I354. The span at S296–Y310 shows a compositional bias: basic and acidic residues.

Belongs to the LSB5 family. Interacts with SLA1 and LAS17.

It is found in the cytoplasm. The protein localises to the cell cortex. The protein resides in the cytoskeleton. Its function is as follows. Essential for the organization of the actin cytoskeleton, fluid phase endocytosis and vesicle trafficking, together with YSC84. This Saccharomyces cerevisiae (strain ATCC 204508 / S288c) (Baker's yeast) protein is LAS seventeen-binding protein 5 (LSB5).